The following is a 94-amino-acid chain: MAAFPHKIIFFLVCSTLTHVAFSGIFNKRDFTRWPKPRCKMYIPLDPDYNADCPNVTAPVCASNGHTFQNECFFCVEQREFHYRIKFEKYGKCD.

Positions 1 to 23 (MAAFPHKIIFFLVCSTLTHVAFS) are cleaved as a signal peptide. Positions 33 to 94 (RWPKPRCKMY…IKFEKYGKCD (62 aa)) constitute a Kazal-like domain. 3 disulfide bridges follow: C39/C75, C53/C72, and C61/C93. N-linked (GlcNAc...) asparagine glycosylation is present at N55.

Its subcellular location is the secreted. Functionally, may be a serine protease inhibitor. Essential for sperm maturation and fertility. Inhibits sperm acrosome reaction, protecting sperm from premature reaction. The polypeptide is Serine protease inhibitor Kazal-type 13 (SPINK13) (Homo sapiens (Human)).